The sequence spans 197 residues: Large ribosomal subunit protein bL25 (197 aa).

The protein belongs to the bacterial ribosomal protein bL25 family. CTC subfamily. In terms of assembly, part of the 50S ribosomal subunit; part of the 5S rRNA/L5/L18/L25 subcomplex. Contacts the 5S rRNA. Binds to the 5S rRNA independently of L5 and L18.

Its function is as follows. This is one of the proteins that binds to the 5S RNA in the ribosome where it forms part of the central protuberance. In Streptomyces avermitilis (strain ATCC 31267 / DSM 46492 / JCM 5070 / NBRC 14893 / NCIMB 12804 / NRRL 8165 / MA-4680), this protein is Large ribosomal subunit protein bL25.